The following is a 231-amino-acid chain: NADH-ubiquinone oxidoreductase chain 4 (231 aa).

The next 6 membrane-spanning stretches (helical) occupy residues 1-21 (PIAG…YGII), 34-54 (MFLP…LTCL), 63-85 (IAYS…TPWG), 89-111 (ALAL…NTTY), 128-148 (ILPM…AIPP), and 169-189 (TIIM…HMFL).

It belongs to the complex I subunit 4 family.

The protein localises to the mitochondrion membrane. It catalyses the reaction a ubiquinone + NADH + 5 H(+)(in) = a ubiquinol + NAD(+) + 4 H(+)(out). Functionally, core subunit of the mitochondrial membrane respiratory chain NADH dehydrogenase (Complex I) that is believed to belong to the minimal assembly required for catalysis. Complex I functions in the transfer of electrons from NADH to the respiratory chain. The immediate electron acceptor for the enzyme is believed to be ubiquinone. This chain is NADH-ubiquinone oxidoreductase chain 4 (MT-ND4), found in Bothrocophias hyoprora (Amazonian hognose viper).